The sequence spans 1305 residues: Contactin-associated protein like 5-3 (1305 aa).

A signal peptide spans 1-24 (MDSVPRLNSVFTLVLSGLWHFGLT). Positions 25-174 (ATNYNCDDPL…IGMRVEVYGC (150 aa)) constitute an F5/8 type C domain. Residues 25 to 1235 (ATNYNCDDPL…EPLTNAVPSD (1211 aa)) lie on the Extracellular side of the membrane. Laminin G-like domains follow at residues 180–360 (VADF…TFSC) and 367–544 (PITF…IDLC). Asn-282 carries N-linked (GlcNAc...) asparagine glycosylation. The cysteines at positions 329 and 360 are disulfide-linked. A glycan (N-linked (GlcNAc...) asparagine) is linked at Asn-496. 3 disulfides stabilise this stretch: Cys-512-Cys-544, Cys-550-Cys-561, and Cys-555-Cys-570. Positions 546 to 583 (IKDRCLPNYCEHGGQCAQTWTNFYCNCSDTGYTGATCH) constitute an EGF-like 1 domain. An N-linked (GlcNAc...) asparagine glycan is attached at Asn-571. A disulfide bond links Cys-572 and Cys-582. One can recognise a Fibrinogen C-terminal domain in the interval 584–790 (DSIYEQSCEV…LRCYGDRHFW (207 aa)). Residues 791–956 (NAVSFSTEAS…KVTSGVRPGC (166 aa)) form the Laminin G-like 3 domain. Disulfide bonds link Cys-929–Cys-956, Cys-960–Cys-973, Cys-967–Cys-982, and Cys-984–Cys-994. One can recognise an EGF-like 2 domain in the interval 957–995 (PGHCSSYGRNCQNGGKCVEKHIGYSCDCTNSPYEGPFCQ). A Laminin G-like 4 domain is found at 1013–1198 (QEPYSVTKNT…VQRTLTESSC (186 aa)). N-linked (GlcNAc...) asparagine glycosylation is found at Asn-1023 and Asn-1057. Cys-1163 and Cys-1198 are disulfide-bonded. The helical transmembrane segment at 1236-1256 (LAVIGGIIAVVTFISFSVIGI) threads the bilayer. The Cytoplasmic portion of the chain corresponds to 1257-1305 (MTHFFYQHKRSHYASQMKEKEYPENVDSSSRNDIDLQNTTRECKQEDFI).

It belongs to the neurexin family. Expressed in brain.

The protein localises to the membrane. Functionally, may play a role in the correct development and proper functioning of the peripheral and central nervous system and be involved in cell adhesion and intercellular communication. In Mus musculus (Mouse), this protein is Contactin-associated protein like 5-3 (Cntnap5c).